We begin with the raw amino-acid sequence, 103 residues long: MDIQYLMRQAKKLEKAMADAKEKLAEIAVEAESGGGLVKVAMNGKCEVTRLTVDPKAIDPNDKAMLEDLITAAVNAAVEKARTAADESMSKATGGIKIPGIAG.

Belongs to the YbaB/EbfC family. Homodimer.

The protein localises to the cytoplasm. It is found in the nucleoid. Binds to DNA and alters its conformation. May be involved in regulation of gene expression, nucleoid organization and DNA protection. This Anaeromyxobacter dehalogenans (strain 2CP-C) protein is Nucleoid-associated protein Adeh_3636.